Reading from the N-terminus, the 439-residue chain is Orphan methyltransferase M.SPRI (439 aa).

The region spanning 4–436 (LRVMSLFSGI…KELIHTYINK (433 aa)) is the SAM-dependent MTase C5-type domain. Residue Cys-78 is part of the active site.

It belongs to the class I-like SAM-binding methyltransferase superfamily. C5-methyltransferase family. In terms of assembly, monomer.

The catalysed reaction is a 2'-deoxycytidine in DNA + S-adenosyl-L-methionine = a 5-methyl-2'-deoxycytidine in DNA + S-adenosyl-L-homocysteine + H(+). A methyltransferase that methylates the C-1 in the sequence 5'-GGCC-3' and both cytosines in the sequence 5'-CCGG-3'. A methyltransferase that methylates C-3 within the sequence 5'-GGCC-3', C-1 in 5'-CCGG-3' and C-2 in 5'-CCWGG-3'. Modification confers resistance against restriction enzymes that recognize these sequences. The sequence is that of Orphan methyltransferase M.SPRI from Bacillus phage SPR (Bacteriophage SPR).